The following is a 239-amino-acid chain: Acidic leucine-rich nuclear phosphoprotein 32 family member B (239 aa).

LRR repeat units follow at residues 16–40 (AADAKELVLDNCRSDDGKIIGLTSE), 43–64 (SLEFLSMINVNLLSVANLPKLP), 65–87 (KLKKLELSDNRISGGLEVLAERT), and 89–110 (NLTHLNLSGNKIKEINTLEPLK). The region spanning 123 to 165 (CEVTMLNNYRESVFELLPKLTFLDGFDADDQEAPDSDPEAEDL) is the LRRCT domain. A compositionally biased stretch (acidic residues) spans 149–215 (DADDQEAPDS…EEDEDDEDVP (67 aa)). The tract at residues 149-239 (DADDQEAPDS…EEEEDDEDDE (91 aa)) is disordered. The segment covering 216–225 (QGEKRKRDLS) has biased composition (basic and acidic residues). The span at 226-239 (DEGEEEEEDDEDDE) shows a compositional bias: acidic residues.

This sequence belongs to the ANP32 family.

The protein localises to the nucleus. Multifunctional protein working as a cell cycle progression factor as well as a cell survival factor. Required for the progression from the G1 to the S phase. Anti-apoptotic protein which functions as a caspase-3 inhibitor. Has no phosphatase 2A (PP2A) inhibitor activity. Exhibits histone chaperone properties, stimulating core histones to assemble into a nucleosome. This Xenopus laevis (African clawed frog) protein is Acidic leucine-rich nuclear phosphoprotein 32 family member B (anp32b).